We begin with the raw amino-acid sequence, 353 residues long: Photosystem II protein D1 (353 aa).

N-acetylthreonine is present on T2. Position 2 is a phosphothreonine (T2). 3 consecutive transmembrane segments (helical) span residues 29-46, 118-133, and 142-156; these read YIGWFGVLMIPTLLTATS, HFLLGVACYMGREWEL, and WIAVAYSAPVAAATA. Residue H118 participates in chlorophyll a binding. Y126 contributes to the pheophytin a binding site. The [CaMn4O5] cluster site is built by D170 and E189. The helical transmembrane segment at 197 to 218 threads the bilayer; that stretch reads FHMLGVAGVFGGSLFSAMHGSL. H198 lines the chlorophyll a pocket. Residues H215 and 264–265 each bind a quinone; that span reads SF. Position 215 (H215) interacts with Fe cation. H272 contacts Fe cation. Residues 274–288 form a helical membrane-spanning segment; sequence FLAAWPVVGIWFTAL. Residues H332, E333, D342, and A344 each contribute to the [CaMn4O5] cluster site. Positions 345–353 are excised as a propeptide; the sequence is VVEAPSTNG.

It belongs to the reaction center PufL/M/PsbA/D family. In terms of assembly, PSII is composed of 1 copy each of membrane proteins PsbA, PsbB, PsbC, PsbD, PsbE, PsbF, PsbH, PsbI, PsbJ, PsbK, PsbL, PsbM, PsbT, PsbX, PsbY, PsbZ, Psb30/Ycf12, at least 3 peripheral proteins of the oxygen-evolving complex and a large number of cofactors. It forms dimeric complexes. Requires The D1/D2 heterodimer binds P680, chlorophylls that are the primary electron donor of PSII, and subsequent electron acceptors. It shares a non-heme iron and each subunit binds pheophytin, quinone, additional chlorophylls, carotenoids and lipids. D1 provides most of the ligands for the Mn4-Ca-O5 cluster of the oxygen-evolving complex (OEC). There is also a Cl(-1) ion associated with D1 and D2, which is required for oxygen evolution. The PSII complex binds additional chlorophylls, carotenoids and specific lipids. as cofactor. Tyr-161 forms a radical intermediate that is referred to as redox-active TyrZ, YZ or Y-Z. Post-translationally, C-terminally processed by CTPA; processing is essential to allow assembly of the oxygen-evolving complex and thus photosynthetic growth.

The protein localises to the plastid. Its subcellular location is the chloroplast thylakoid membrane. The enzyme catalyses 2 a plastoquinone + 4 hnu + 2 H2O = 2 a plastoquinol + O2. Its function is as follows. Photosystem II (PSII) is a light-driven water:plastoquinone oxidoreductase that uses light energy to abstract electrons from H(2)O, generating O(2) and a proton gradient subsequently used for ATP formation. It consists of a core antenna complex that captures photons, and an electron transfer chain that converts photonic excitation into a charge separation. The D1/D2 (PsbA/PsbD) reaction center heterodimer binds P680, the primary electron donor of PSII as well as several subsequent electron acceptors. The polypeptide is Photosystem II protein D1 (Aethionema grandiflorum (Persian stone-cress)).